Reading from the N-terminus, the 146-residue chain is Ribonuclease H (146 aa).

Residues Met1–Lys143 form the RNase H type-1 domain. Positions 10, 48, 70, and 135 each coordinate Mg(2+).

It belongs to the RNase H family. As to quaternary structure, monomer. Mg(2+) serves as cofactor.

It is found in the cytoplasm. It carries out the reaction Endonucleolytic cleavage to 5'-phosphomonoester.. Its function is as follows. Endonuclease that specifically degrades the RNA of RNA-DNA hybrids. The polypeptide is Ribonuclease H (Prosthecochloris aestuarii (strain DSM 271 / SK 413)).